A 736-amino-acid polypeptide reads, in one-letter code: Microtubule-associated protein mu-2 (736 aa).

Belongs to the orthoreovirus mu-2 protein family. In terms of assembly, interacts with protein mu-NS; in viral inclusions. Interacts with polymerase lambda-3; this interaction stimulates the ATPase activity of mu-2. A divalent metal cation is required as a cofactor.

The protein resides in the virion. It is found in the host cytoplasm. Its subcellular location is the host cytoskeleton. Minor inner capsid (core) component. Displays NTPase and RNA 5'-triphosphatase (RTPase) activities. ATP is the preferred substrate for hydrolysis. May function as a cofactor of polymerase lambda-3. Associates with microtubules and plays a role in the formation, structural organization and morphology of viral inclusions, where the assembly of cores and the replication of viral RNA occur. Together with mu-NS, recruits the other core proteins to these inclusions. The sequence is that of Microtubule-associated protein mu-2 (M1) from Mammalia (T2J).